The following is a 417-amino-acid chain: Serine hydroxymethyltransferase (417 aa).

Residues Leu-121 and 125 to 127 (GHL) contribute to the (6S)-5,6,7,8-tetrahydrofolate site. Position 229 is an N6-(pyridoxal phosphate)lysine (Lys-229). A (6S)-5,6,7,8-tetrahydrofolate-binding site is contributed by 355 to 357 (SPF).

The protein belongs to the SHMT family. As to quaternary structure, homodimer. Pyridoxal 5'-phosphate serves as cofactor.

Its subcellular location is the cytoplasm. It catalyses the reaction (6R)-5,10-methylene-5,6,7,8-tetrahydrofolate + glycine + H2O = (6S)-5,6,7,8-tetrahydrofolate + L-serine. It functions in the pathway one-carbon metabolism; tetrahydrofolate interconversion. Its pathway is amino-acid biosynthesis; glycine biosynthesis; glycine from L-serine: step 1/1. Functionally, catalyzes the reversible interconversion of serine and glycine with tetrahydrofolate (THF) serving as the one-carbon carrier. This reaction serves as the major source of one-carbon groups required for the biosynthesis of purines, thymidylate, methionine, and other important biomolecules. Also exhibits THF-independent aldolase activity toward beta-hydroxyamino acids, producing glycine and aldehydes, via a retro-aldol mechanism. This is Serine hydroxymethyltransferase from Citrobacter koseri (strain ATCC BAA-895 / CDC 4225-83 / SGSC4696).